A 305-amino-acid chain; its full sequence is UDP-3-O-acyl-N-acetylglucosamine deacetylase (305 aa).

Positions 79, 238, and 242 each coordinate Zn(2+). Residue H265 is the Proton donor of the active site.

This sequence belongs to the LpxC family. It depends on Zn(2+) as a cofactor.

It carries out the reaction a UDP-3-O-[(3R)-3-hydroxyacyl]-N-acetyl-alpha-D-glucosamine + H2O = a UDP-3-O-[(3R)-3-hydroxyacyl]-alpha-D-glucosamine + acetate. It functions in the pathway glycolipid biosynthesis; lipid IV(A) biosynthesis; lipid IV(A) from (3R)-3-hydroxytetradecanoyl-[acyl-carrier-protein] and UDP-N-acetyl-alpha-D-glucosamine: step 2/6. Its function is as follows. Catalyzes the hydrolysis of UDP-3-O-myristoyl-N-acetylglucosamine to form UDP-3-O-myristoylglucosamine and acetate, the committed step in lipid A biosynthesis. The protein is UDP-3-O-acyl-N-acetylglucosamine deacetylase of Shewanella woodyi (strain ATCC 51908 / MS32).